Consider the following 529-residue polypeptide: Bifunctional purine biosynthesis protein PurH (529 aa).

Positions 2-149 constitute an MGS-like domain; it reads TDLSPVRRAL…KNHAFVNVVV (148 aa).

It belongs to the PurH family.

The catalysed reaction is (6R)-10-formyltetrahydrofolate + 5-amino-1-(5-phospho-beta-D-ribosyl)imidazole-4-carboxamide = 5-formamido-1-(5-phospho-D-ribosyl)imidazole-4-carboxamide + (6S)-5,6,7,8-tetrahydrofolate. It carries out the reaction IMP + H2O = 5-formamido-1-(5-phospho-D-ribosyl)imidazole-4-carboxamide. Its pathway is purine metabolism; IMP biosynthesis via de novo pathway; 5-formamido-1-(5-phospho-D-ribosyl)imidazole-4-carboxamide from 5-amino-1-(5-phospho-D-ribosyl)imidazole-4-carboxamide (10-formyl THF route): step 1/1. It functions in the pathway purine metabolism; IMP biosynthesis via de novo pathway; IMP from 5-formamido-1-(5-phospho-D-ribosyl)imidazole-4-carboxamide: step 1/1. The protein is Bifunctional purine biosynthesis protein PurH of Ruegeria pomeroyi (strain ATCC 700808 / DSM 15171 / DSS-3) (Silicibacter pomeroyi).